Here is an 80-residue protein sequence, read N- to C-terminus: Exodeoxyribonuclease 7 small subunit (80 aa).

Belongs to the XseB family. In terms of assembly, heterooligomer composed of large and small subunits.

The protein localises to the cytoplasm. It catalyses the reaction Exonucleolytic cleavage in either 5'- to 3'- or 3'- to 5'-direction to yield nucleoside 5'-phosphates.. Bidirectionally degrades single-stranded DNA into large acid-insoluble oligonucleotides, which are then degraded further into small acid-soluble oligonucleotides. The protein is Exodeoxyribonuclease 7 small subunit of Caulobacter sp. (strain K31).